Consider the following 599-residue polypeptide: Proline--tRNA ligase (599 aa).

It belongs to the class-II aminoacyl-tRNA synthetase family. ProS type 1 subfamily. In terms of assembly, homodimer.

The protein localises to the cytoplasm. The enzyme catalyses tRNA(Pro) + L-proline + ATP = L-prolyl-tRNA(Pro) + AMP + diphosphate. Catalyzes the attachment of proline to tRNA(Pro) in a two-step reaction: proline is first activated by ATP to form Pro-AMP and then transferred to the acceptor end of tRNA(Pro). As ProRS can inadvertently accommodate and process non-cognate amino acids such as alanine and cysteine, to avoid such errors it has two additional distinct editing activities against alanine. One activity is designated as 'pretransfer' editing and involves the tRNA(Pro)-independent hydrolysis of activated Ala-AMP. The other activity is designated 'posttransfer' editing and involves deacylation of mischarged Ala-tRNA(Pro). The misacylated Cys-tRNA(Pro) is not edited by ProRS. The protein is Proline--tRNA ligase of Prochlorococcus marinus (strain MIT 9303).